The sequence spans 284 residues: MSAHTRITRKTVTAIRSTKGIGSLVSLTAYSAPMAKLVDEVADVIIVGDSVGMVLYGMPDTLRVTLDMMIAHGAAVVRGAAQACVVVDLPFSTFQESPAQAYRSAARLLAETGAQAVKLEGGCEMTDTIRFLTDRGIPVMAHVGLMPQQANAAGGFRAQGMDPRSAAQVFDAACAAERAGAFSVVIEGTAEALARHLTETLTIPTIGIGASPACDGQVLVTEDMIGAFDAYTPRFVKRYADANAVMRDAIRQYAHDVRQRVFPEPAHCFGYGKPLQLADAATAA.

Positions 49 and 88 each coordinate Mg(2+). 3-methyl-2-oxobutanoate-binding positions include 49–50 (DS), Asp-88, and Lys-118. Glu-120 contributes to the Mg(2+) binding site. Glu-187 serves as the catalytic Proton acceptor.

Belongs to the PanB family. As to quaternary structure, homodecamer; pentamer of dimers. It depends on Mg(2+) as a cofactor.

Its subcellular location is the cytoplasm. It catalyses the reaction 3-methyl-2-oxobutanoate + (6R)-5,10-methylene-5,6,7,8-tetrahydrofolate + H2O = 2-dehydropantoate + (6S)-5,6,7,8-tetrahydrofolate. The protein operates within cofactor biosynthesis; (R)-pantothenate biosynthesis; (R)-pantoate from 3-methyl-2-oxobutanoate: step 1/2. Its function is as follows. Catalyzes the reversible reaction in which hydroxymethyl group from 5,10-methylenetetrahydrofolate is transferred onto alpha-ketoisovalerate to form ketopantoate. In Burkholderia cenocepacia (strain HI2424), this protein is 3-methyl-2-oxobutanoate hydroxymethyltransferase 2.